The following is a 247-amino-acid chain: MIILFDVGNTSIYTGLSNGTNIDETFRMNTDIHKSPDEYFVTLKSFIDPNVITGVIIGSVVPLVTQALIALTEKYLKLKPVVIEPGTKTGIFVKADNPREVGADLIANAAGLDNPHPTLIIDLGTANKLIYVKNQMITGVIIAPGLQLSIHALDGNTALLHEVDIKVPKKYLGNNTIHCIQSGVVYGTIVMIEGMFGRIREEVGEDFDVIITGGLSSLILEHIRLDIKQDKELVLKGLLNIYKKNIK.

Residue Asp-6–Tyr-13 coordinates ATP. Gly-102–Leu-105 lines the substrate pocket. Asp-104 serves as the catalytic Proton acceptor. Asp-122 provides a ligand contact to K(+). Residue Thr-125 participates in ATP binding. Residue Thr-176 coordinates substrate.

This sequence belongs to the type III pantothenate kinase family. As to quaternary structure, homodimer. NH4(+) serves as cofactor. The cofactor is K(+).

The protein localises to the cytoplasm. It catalyses the reaction (R)-pantothenate + ATP = (R)-4'-phosphopantothenate + ADP + H(+). The protein operates within cofactor biosynthesis; coenzyme A biosynthesis; CoA from (R)-pantothenate: step 1/5. Catalyzes the phosphorylation of pantothenate (Pan), the first step in CoA biosynthesis. In Acholeplasma laidlawii (strain PG-8A), this protein is Type III pantothenate kinase.